Here is a 342-residue protein sequence, read N- to C-terminus: Tryptophan--tRNA ligase (342 aa).

Residues 19–21 (QPS) and 27–28 (GN) contribute to the ATP site. Residues 20–28 (PSGELTIGN) carry the 'HIGH' region motif. Residue Asp143 coordinates L-tryptophan. Residues 155–157 (GED), Val194, and 203–207 (KMSKS) each bind ATP. The 'KMSKS' region signature appears at 203 to 207 (KMSKS).

Belongs to the class-I aminoacyl-tRNA synthetase family. In terms of assembly, homodimer.

Its subcellular location is the cytoplasm. It catalyses the reaction tRNA(Trp) + L-tryptophan + ATP = L-tryptophyl-tRNA(Trp) + AMP + diphosphate + H(+). Functionally, catalyzes the attachment of tryptophan to tRNA(Trp). In Yersinia pestis, this protein is Tryptophan--tRNA ligase.